The chain runs to 498 residues: Histidine--tRNA ligase (498 aa).

Belongs to the class-II aminoacyl-tRNA synthetase family. As to quaternary structure, homodimer.

Its subcellular location is the cytoplasm. The catalysed reaction is tRNA(His) + L-histidine + ATP = L-histidyl-tRNA(His) + AMP + diphosphate + H(+). This Mycoplasmopsis synoviae (strain 53) (Mycoplasma synoviae) protein is Histidine--tRNA ligase.